We begin with the raw amino-acid sequence, 341 residues long: tRNA N6-adenosine threonylcarbamoyltransferase (341 aa).

Fe cation contacts are provided by His115 and His119. Substrate-binding positions include 137 to 141 (AVSGG), Asp170, Gly183, Asp187, and Asn276. Asp306 provides a ligand contact to Fe cation.

Belongs to the KAE1 / TsaD family. The cofactor is Fe(2+).

Its subcellular location is the cytoplasm. The enzyme catalyses L-threonylcarbamoyladenylate + adenosine(37) in tRNA = N(6)-L-threonylcarbamoyladenosine(37) in tRNA + AMP + H(+). Functionally, required for the formation of a threonylcarbamoyl group on adenosine at position 37 (t(6)A37) in tRNAs that read codons beginning with adenine. Is involved in the transfer of the threonylcarbamoyl moiety of threonylcarbamoyl-AMP (TC-AMP) to the N6 group of A37, together with TsaE and TsaB. TsaD likely plays a direct catalytic role in this reaction. The chain is tRNA N6-adenosine threonylcarbamoyltransferase from Lacticaseibacillus casei (strain BL23) (Lactobacillus casei).